Here is a 395-residue protein sequence, read N- to C-terminus: Acetate kinase (395 aa).

A Mg(2+)-binding site is contributed by N7. K14 lines the ATP pocket. R92 is a substrate binding site. The active-site Proton donor/acceptor is D149. ATP contacts are provided by residues 207–211 (HLGNG), 282–284 (DMR), and 329–333 (GIGEN). Residue E382 coordinates Mg(2+).

The protein belongs to the acetokinase family. Homodimer. The cofactor is Mg(2+). Mn(2+) is required as a cofactor.

The protein localises to the cytoplasm. The catalysed reaction is acetate + ATP = acetyl phosphate + ADP. It functions in the pathway metabolic intermediate biosynthesis; acetyl-CoA biosynthesis; acetyl-CoA from acetate: step 1/2. Functionally, catalyzes the formation of acetyl phosphate from acetate and ATP. Can also catalyze the reverse reaction. The chain is Acetate kinase from Brachyspira hyodysenteriae (strain ATCC 49526 / WA1).